The chain runs to 360 residues: Phospho-N-acetylmuramoyl-pentapeptide-transferase (360 aa).

10 consecutive transmembrane segments (helical) span residues 25–45, 73–93, 97–117, 132–152, 168–188, 199–219, 236–256, 263–283, 288–308, and 339–359; these read RAIL…PWVI, TMGG…WADL, YVLA…VDDY, WKYF…FVTA, VAWQ…VGFS, GLAI…AYLV, SGEL…FLWF, VFMG…IAVI, IVFF…ILQV, and IVRF…TLKI.

The protein belongs to the glycosyltransferase 4 family. MraY subfamily. Requires Mg(2+) as cofactor.

Its subcellular location is the cell inner membrane. It carries out the reaction UDP-N-acetyl-alpha-D-muramoyl-L-alanyl-gamma-D-glutamyl-meso-2,6-diaminopimeloyl-D-alanyl-D-alanine + di-trans,octa-cis-undecaprenyl phosphate = di-trans,octa-cis-undecaprenyl diphospho-N-acetyl-alpha-D-muramoyl-L-alanyl-D-glutamyl-meso-2,6-diaminopimeloyl-D-alanyl-D-alanine + UMP. It participates in cell wall biogenesis; peptidoglycan biosynthesis. Catalyzes the initial step of the lipid cycle reactions in the biosynthesis of the cell wall peptidoglycan: transfers peptidoglycan precursor phospho-MurNAc-pentapeptide from UDP-MurNAc-pentapeptide onto the lipid carrier undecaprenyl phosphate, yielding undecaprenyl-pyrophosphoryl-MurNAc-pentapeptide, known as lipid I. This is Phospho-N-acetylmuramoyl-pentapeptide-transferase from Teredinibacter turnerae (strain ATCC 39867 / T7901).